Reading from the N-terminus, the 392-residue chain is Riboflavin biosynthesis protein PYRD, chloroplastic (392 aa).

Residues M1–R26 constitute a chloroplast transit peptide. Positions L46 to R168 constitute a CMP/dCMP-type deaminase domain. Residue H95 participates in Zn(2+) binding. E97 (proton donor) is an active-site residue. Residues C120 and C129 each coordinate Zn(2+).

The cofactor is Zn(2+).

The protein localises to the plastid. The protein resides in the chloroplast. The catalysed reaction is 2,5-diamino-6-hydroxy-4-(5-phosphoribosylamino)-pyrimidine + H2O + H(+) = 5-amino-6-(5-phospho-D-ribosylamino)uracil + NH4(+). Its pathway is cofactor biosynthesis; riboflavin biosynthesis; 5-amino-6-(D-ribitylamino)uracil from GTP: step 2/4. Its function is as follows. Monofunctional pyrimidine deaminase involved in the riboflavin biosynthesis pathway. Also has a reductase domain that lacks catalytically essential substrate-binding residues. This chain is Riboflavin biosynthesis protein PYRD, chloroplastic (PYRD), found in Zea mays (Maize).